The primary structure comprises 627 residues: Carene synthase 3, chloroplastic (627 aa).

A chloroplast-targeting transit peptide spans 1–36 (MSVISIVPLASKSCLYKSLMSSTHELKALCRPIATL). 3 residues coordinate Mg(2+): Asp-378, Asp-382, and Asp-530. Positions 378-382 (DDMYD) match the DDXXD motif motif.

The protein belongs to the terpene synthase family. Tpsd subfamily. Mg(2+) is required as a cofactor. Requires Mn(2+) as cofactor.

It localises to the plastid. The protein resides in the chloroplast. The enzyme catalyses (2E)-geranyl diphosphate = (+)-car-3-ene + diphosphate. It participates in terpene metabolism; oleoresin biosynthesis. Its function is as follows. Terpene synthase (TPS) involved in defensive oleoresin formation in conifers in response to insect attack or other injury. In Picea sitchensis (Sitka spruce), this protein is Carene synthase 3, chloroplastic (TPS-3car3).